The sequence spans 300 residues: Bifunctional protein FolD 2 (300 aa).

Residues 165 to 167 (GRS), Ser190, and Ile231 each bind NADP(+).

It belongs to the tetrahydrofolate dehydrogenase/cyclohydrolase family. In terms of assembly, homodimer.

The enzyme catalyses (6R)-5,10-methylene-5,6,7,8-tetrahydrofolate + NADP(+) = (6R)-5,10-methenyltetrahydrofolate + NADPH. It catalyses the reaction (6R)-5,10-methenyltetrahydrofolate + H2O = (6R)-10-formyltetrahydrofolate + H(+). The protein operates within one-carbon metabolism; tetrahydrofolate interconversion. Catalyzes the oxidation of 5,10-methylenetetrahydrofolate to 5,10-methenyltetrahydrofolate and then the hydrolysis of 5,10-methenyltetrahydrofolate to 10-formyltetrahydrofolate. This is Bifunctional protein FolD 2 from Pseudomonas savastanoi pv. phaseolicola (strain 1448A / Race 6) (Pseudomonas syringae pv. phaseolicola (strain 1448A / Race 6)).